The sequence spans 353 residues: L-tryptophan dehydrogenase (353 aa).

Arginine 44 serves as a coordination point for NAD(+). The active-site Proton donor/acceptor is lysine 80. Residues aspartate 114, threonine 146, 176 to 181 (GLGNVG), lysine 204, and 255 to 257 (AAN) each bind NAD(+).

Belongs to the Glu/Leu/Phe/Val dehydrogenases family. In terms of assembly, homodimer.

The catalysed reaction is L-tryptophan + NAD(+) + H2O = indole-3-pyruvate + NH4(+) + NADH + H(+). Highly susceptible to inhibition by indole-3-pyruvate. Activity is not affected by the presence of metal ions, EDTA, KCl or DMSO. Its function is as follows. Catalyzes the reversible oxidative deamination of L-tryptophan to indole-3-pyruvate in the presence of NAD(+). Shows weak activity with L-phenylalanine, but cannot use other L-amino acids and D-Trp. Cannot use NADP(+) for oxidative deamination of L-Trp, and shows only weak activity with NADPH for reductive amination of indole-3-pyruvate. Involved in the biosynthesis of scytonemin, a cyanobacterial radiation-absorbing pigment. In Nostoc punctiforme, this protein is L-tryptophan dehydrogenase.